The sequence spans 229 residues: Large ribosomal subunit protein uL1 (229 aa).

It belongs to the universal ribosomal protein uL1 family. Part of the 50S ribosomal subunit.

In terms of biological role, binds directly to 23S rRNA. The L1 stalk is quite mobile in the ribosome, and is involved in E site tRNA release. Functionally, protein L1 is also a translational repressor protein, it controls the translation of the L11 operon by binding to its mRNA. This is Large ribosomal subunit protein uL1 from Clostridium tetani (strain Massachusetts / E88).